The primary structure comprises 562 residues: MYKEIIAYLKLKYGKVKPQSVIGKIIAKNPELKAKIKELIPIIEQEIKEVEQMDIEQIKELAKAYEQTIEKKEKDIEIPVKDKVITRFAPNPSGLLHIGHARAIVLNHYIAKKYNGQFILRIEDTDPDVKKPMIEAYELIPKDVEWLIQEKPDKIVVQSDRLDIYYKYIEELIKQGKAYVCLCKAEEFREYRNKGLPCPHRNQSIEENLELWSKMLKGEFKKGEAVVRLKTDLTHKDPGVRDFPIARIVENPHPRIGYKPVFPLYNFAVVIDDHLLGITHVIRMKEHTNNAIKQSFIYKAFGWEEPIYLEYGALLTDMPTHKSEIRKLIEQKQIEGWDDIRLPTLIALRRRGILPEAIYEYIVKDVGLNKADIKVDWNKIYYYHKIRIDKQTPRYFMIRDPIAIVIENYDDIIDKFEIKNGIPYKKISKHPDVDLGYRELPIKEVLYIDKRDAERLKQKPLRLFELFNIKFVGEIEIEYGDEYSKTKEKAYAVRVISFDVQEAIKNKYPIVQWLPEYEETTLFELDGYKKAYVEPNIKENYVHFIREGYYKRENDKWIFSVK.

Residues 90–100 carry the 'HIGH' region motif; sequence PNPSGLLHIGH.

This sequence belongs to the class-I aminoacyl-tRNA synthetase family. Glutamate--tRNA ligase type 2 subfamily.

The protein resides in the cytoplasm. The enzyme catalyses tRNA(Glu) + L-glutamate + ATP = L-glutamyl-tRNA(Glu) + AMP + diphosphate. Its function is as follows. Catalyzes the attachment of glutamate to tRNA(Glu) in a two-step reaction: glutamate is first activated by ATP to form Glu-AMP and then transferred to the acceptor end of tRNA(Glu). In Nanoarchaeum equitans (strain Kin4-M), this protein is Glutamate--tRNA ligase.